The chain runs to 516 residues: Cytochrome P450 monooxygenase otaC (516 aa).

Residues Phe-13 to Val-30 traverse the membrane as a helical segment. Cys-454 lines the heme pocket.

This sequence belongs to the cytochrome P450 family. Heme is required as a cofactor.

Its subcellular location is the membrane. The catalysed reaction is 7-methylmellein + 3 reduced [NADPH--hemoprotein reductase] + 3 O2 = 7-carboxymellein + 3 oxidized [NADPH--hemoprotein reductase] + 4 H2O + 4 H(+). It participates in mycotoxin biosynthesis. Its function is as follows. Cytochrome P450 monooxygenase; part of the gene cluster that mediates the biosynthesis of ochratoxin A (OTA), a mycotoxin composed of a chlorinated type I polyketide dihydroisocoumarin moiety linked to L-phenylalanine, and demonstrated to have nephrotoxic, immunotoxic, genotoxic, neurotoxic, and teratogenic properties. OtaC catalyzes the oxidation of 7-methylmellein (7-MM) into 7-carboxymellein. The pathway begins with the highly reducing polyketide synthase otaA that catalyzes the formation of the isocoumarin group during the initial stages of biosynthesis, starting from one acetate and 4 malonate units, to originate the characteristic pentaketide skeleton 7-methylmellein (7-MM) of the OTA molecule. The newly identified cyclase otaY might be involved in the polyketide cyclization reaction during the initial steps of the OTA biosynthesis. 7-MM is then oxidized into 7-carboxymellein (also called ochratoxin beta) by the cytochrome P450 monooxygenase otaC. The NRPS encoded by the otaB gene is involved in the linking of phenylalanine to the dihydroisocoumarin ring. The reaction catalyzed by NRPS results in the production of ochratoxin B (OTB), which is the non-chlorinated analog of OTA and which subsequently serves as the substrate of the halogenase otaD for chlorination activity to form the final molecular structure of OTA, containing a chlorine atom in the C-5 position of the molecule. The chain is Cytochrome P450 monooxygenase otaC from Aspergillus carbonarius (strain ITEM 5010).